Here is a 259-residue protein sequence, read N- to C-terminus: Dihydroorotate dehydrogenase B (NAD(+)), electron transfer subunit (259 aa).

Residues 3 to 103 (KKQGRLTIVK…LGPLGQGFPL (101 aa)) enclose the FAD-binding FR-type domain. FAD is bound by residues 54–57 (RPIS), 71–73 (IYR), and 78–79 (GT). [2Fe-2S] cluster is bound by residues Cys222, Cys227, Cys230, and Cys246.

It belongs to the PyrK family. Heterotetramer of 2 PyrK and 2 PyrD type B subunits. The cofactor is [2Fe-2S] cluster. FAD is required as a cofactor.

Its pathway is pyrimidine metabolism; UMP biosynthesis via de novo pathway; orotate from (S)-dihydroorotate (NAD(+) route): step 1/1. In terms of biological role, responsible for channeling the electrons from the oxidation of dihydroorotate from the FMN redox center in the PyrD type B subunit to the ultimate electron acceptor NAD(+). The chain is Dihydroorotate dehydrogenase B (NAD(+)), electron transfer subunit from Shouchella clausii (strain KSM-K16) (Alkalihalobacillus clausii).